The chain runs to 45 residues: Photosystem II reaction center protein K (45 aa).

The propeptide occupies 1–8 (METALLLA). Residues 24–44 (LPLIPLFFLLLAFVWQASVGF) form a helical membrane-spanning segment.

The protein belongs to the PsbK family. As to quaternary structure, PSII is composed of 1 copy each of membrane proteins PsbA, PsbB, PsbC, PsbD, PsbE, PsbF, PsbH, PsbI, PsbJ, PsbK, PsbL, PsbM, PsbT, PsbX, PsbY, PsbZ, Psb30/Ycf12, peripheral proteins PsbO, CyanoQ (PsbQ), PsbU, PsbV and a large number of cofactors. It forms dimeric complexes.

It is found in the cellular thylakoid membrane. In terms of biological role, one of the components of the core complex of photosystem II (PSII). PSII is a light-driven water:plastoquinone oxidoreductase that uses light energy to abstract electrons from H(2)O, generating O(2) and a proton gradient subsequently used for ATP formation. It consists of a core antenna complex that captures photons, and an electron transfer chain that converts photonic excitation into a charge separation. The sequence is that of Photosystem II reaction center protein K from Microcystis aeruginosa (strain NIES-843 / IAM M-2473).